The following is a 483-amino-acid chain: Glutamyl-tRNA(Gln) amidotransferase subunit A (483 aa).

Catalysis depends on charge relay system residues Lys75 and Ser150. Catalysis depends on Ser174, which acts as the Acyl-ester intermediate.

Belongs to the amidase family. GatA subfamily. As to quaternary structure, heterotrimer of A, B and C subunits.

It carries out the reaction L-glutamyl-tRNA(Gln) + L-glutamine + ATP + H2O = L-glutaminyl-tRNA(Gln) + L-glutamate + ADP + phosphate + H(+). Functionally, allows the formation of correctly charged Gln-tRNA(Gln) through the transamidation of misacylated Glu-tRNA(Gln) in organisms which lack glutaminyl-tRNA synthetase. The reaction takes place in the presence of glutamine and ATP through an activated gamma-phospho-Glu-tRNA(Gln). This is Glutamyl-tRNA(Gln) amidotransferase subunit A from Gloeothece citriformis (strain PCC 7424) (Cyanothece sp. (strain PCC 7424)).